Consider the following 114-residue polypeptide: uncharacterized protein (114 aa).

An HIT domain is found at 6–114 (IFSKIIRREI…GGRPFSWPPG (109 aa)). Residues 98-102 (HLHLH) carry the Histidine triad motif motif.

This is an uncharacterized protein from Synechocystis sp. (strain ATCC 27184 / PCC 6803 / Kazusa).